Reading from the N-terminus, the 439-residue chain is Ribulose bisphosphate carboxylase/oxygenase activase 2, chloroplastic (439 aa).

The transit peptide at 1-58 (MATSVSTIGAANKAPLSLNNSVAGTSVPSTAFFGKTLKKVYGKGVSSPKVTNRSLRIA) directs the protein to the chloroplast. 169 to 176 (GGKGQGKS) contributes to the ATP binding site.

The protein belongs to the RuBisCO activase family.

The protein resides in the plastid. Its subcellular location is the chloroplast stroma. Activation of RuBisCO (ribulose-1,5-bisphosphate carboxylase/oxygenase; EC 4.1.1.39) involves the ATP-dependent carboxylation of the epsilon-amino group of lysine leading to a carbamate structure. This is Ribulose bisphosphate carboxylase/oxygenase activase 2, chloroplastic (RCA) from Nicotiana tabacum (Common tobacco).